The primary structure comprises 214 residues: Protein-L-isoaspartate O-methyltransferase 1 (214 aa).

S62 is a catalytic residue.

This sequence belongs to the methyltransferase superfamily. L-isoaspartyl/D-aspartyl protein methyltransferase family.

Its subcellular location is the cytoplasm. The enzyme catalyses [protein]-L-isoaspartate + S-adenosyl-L-methionine = [protein]-L-isoaspartate alpha-methyl ester + S-adenosyl-L-homocysteine. Functionally, catalyzes the methyl esterification of L-isoaspartyl residues in peptides and proteins that result from spontaneous decomposition of normal L-aspartyl and L-asparaginyl residues. It plays a role in the repair and/or degradation of damaged proteins. The chain is Protein-L-isoaspartate O-methyltransferase 1 from Syntrophobacter fumaroxidans (strain DSM 10017 / MPOB).